A 178-amino-acid polypeptide reads, in one-letter code: uncharacterized protein (178 aa).

Belongs to the mimivirus L39/R874 family.

This is an uncharacterized protein from Acanthamoeba polyphaga (Amoeba).